Reading from the N-terminus, the 400-residue chain is Ribosomal RNA large subunit methyltransferase I (400 aa).

The PUA domain maps to 6–84; the sequence is FPRLVLAKGR…NEAIDSAFFE (79 aa).

It belongs to the methyltransferase superfamily. RlmI family.

It is found in the cytoplasm. It carries out the reaction cytidine(1962) in 23S rRNA + S-adenosyl-L-methionine = 5-methylcytidine(1962) in 23S rRNA + S-adenosyl-L-homocysteine + H(+). Functionally, specifically methylates the cytosine at position 1962 (m5C1962) of 23S rRNA. The protein is Ribosomal RNA large subunit methyltransferase I of Klebsiella pneumoniae (strain 342).